The following is a 282-amino-acid chain: S-formylglutathione hydrolase (282 aa).

Position 2 is an N-acetylalanine (Ala-2). An N6-succinyllysine modification is found at Lys-4. Catalysis depends on charge relay system residues Ser-149, Asp-226, and His-260.

Belongs to the esterase D family. Homodimer.

The protein resides in the cytoplasm. It is found in the cytoplasmic vesicle. The catalysed reaction is S-formylglutathione + H2O = formate + glutathione + H(+). Serine hydrolase involved in the detoxification of formaldehyde. The chain is S-formylglutathione hydrolase (ESD) from Bos taurus (Bovine).